The following is a 233-amino-acid chain: Purine nucleoside phosphorylase DeoD-type (233 aa).

His4 is an a purine D-ribonucleoside binding site. Residues Gly20, Arg24, Arg43, and 87-90 (RVGS) each bind phosphate. A purine D-ribonucleoside-binding positions include 178–180 (EME) and 202–203 (SD). The active-site Proton donor is Asp203.

Belongs to the PNP/UDP phosphorylase family. As to quaternary structure, homohexamer; trimer of homodimers.

It carries out the reaction a purine D-ribonucleoside + phosphate = a purine nucleobase + alpha-D-ribose 1-phosphate. It catalyses the reaction a purine 2'-deoxy-D-ribonucleoside + phosphate = a purine nucleobase + 2-deoxy-alpha-D-ribose 1-phosphate. In terms of biological role, catalyzes the reversible phosphorolytic breakdown of the N-glycosidic bond in the beta-(deoxy)ribonucleoside molecules, with the formation of the corresponding free purine bases and pentose-1-phosphate. The protein is Purine nucleoside phosphorylase DeoD-type of Bacillus subtilis (strain 168).